Reading from the N-terminus, the 348-residue chain is Protein RecA (348 aa).

Gly67–Thr74 is a binding site for ATP.

Belongs to the RecA family.

The protein resides in the cytoplasm. In terms of biological role, can catalyze the hydrolysis of ATP in the presence of single-stranded DNA, the ATP-dependent uptake of single-stranded DNA by duplex DNA, and the ATP-dependent hybridization of homologous single-stranded DNAs. It interacts with LexA causing its activation and leading to its autocatalytic cleavage. The protein is Protein RecA of Salinispora arenicola (strain CNS-205).